The sequence spans 232 residues: Fibrillarin-like rRNA/tRNA 2'-O-methyltransferase (232 aa).

S-adenosyl-L-methionine-binding positions include 89 to 90 (TT), 108 to 109 (EF), 133 to 134 (DA), and 153 to 156 (DIAQ).

This sequence belongs to the methyltransferase superfamily. Fibrillarin family. Interacts with nop5. Component of box C/D small ribonucleoprotein (sRNP) particles that contain rpl7ae, FlpA and nop5, plus a guide RNA.

Involved in pre-rRNA and tRNA processing. Utilizes the methyl donor S-adenosyl-L-methionine to catalyze the site-specific 2'-hydroxyl methylation of ribose moieties in rRNA and tRNA. Site specificity is provided by a guide RNA that base pairs with the substrate. Methylation occurs at a characteristic distance from the sequence involved in base pairing with the guide RNA. The protein is Fibrillarin-like rRNA/tRNA 2'-O-methyltransferase of Methanopyrus kandleri (strain AV19 / DSM 6324 / JCM 9639 / NBRC 100938).